We begin with the raw amino-acid sequence, 425 residues long: Dihydroorotase (425 aa).

Zn(2+)-binding residues include histidine 56 and histidine 58. Substrate is bound by residues histidine 58 to arginine 60 and asparagine 90. Zn(2+)-binding residues include aspartate 148, histidine 175, and histidine 228. Position 274 (asparagine 274) interacts with substrate. Aspartate 301 is a binding site for Zn(2+). Residue aspartate 301 is part of the active site. Residues histidine 305 and phenylalanine 319 to glycine 320 each bind substrate.

The protein belongs to the metallo-dependent hydrolases superfamily. DHOase family. Class I DHOase subfamily. Zn(2+) serves as cofactor.

The enzyme catalyses (S)-dihydroorotate + H2O = N-carbamoyl-L-aspartate + H(+). It functions in the pathway pyrimidine metabolism; UMP biosynthesis via de novo pathway; (S)-dihydroorotate from bicarbonate: step 3/3. Functionally, catalyzes the reversible cyclization of carbamoyl aspartate to dihydroorotate. The protein is Dihydroorotase of Lactobacillus delbrueckii subsp. bulgaricus (strain ATCC BAA-365 / Lb-18).